Here is a 653-residue protein sequence, read N- to C-terminus: Structural protein ORF653 (653 aa).

Positions 300–330 (AKEETKQETKQETGKEEEEKKETKQESQEQL) form a coiled coil. The segment covering 302–326 (EETKQETKQETGKEEEEKKETKQES) has biased composition (basic and acidic residues). Disordered stretches follow at residues 302–329 (EETK…SQEQ), 344–388 (GQPA…ENTP), and 626–653 (AGQQ…VKLS). Residues 371 to 381 (EENNAEAPQQR) show a composition bias toward low complexity. Positions 505-649 (KEQELYKELD…EEEEEEGNDT (145 aa)) form a coiled coil. Positions 630–647 (EETDETTEEEEEEEEEGN) are enriched in acidic residues.

It localises to the virion. This is Structural protein ORF653 from Acidianus two-tailed virus (ATV).